A 616-amino-acid chain; its full sequence is DEAD-box ATP-dependent RNA helicase 53, mitochondrial (616 aa).

A mitochondrion-targeting transit peptide spans 1-81 (MITTVLRRSL…DFRASMVSQA (81 aa)). A Q motif motif is present at residues 104–132 (LAISELGISPEIVKALSSKGIEKLFPIQK). A Helicase ATP-binding domain is found at 135 to 309 (LEPAMEGRDM…KKYLNNPLTV (175 aa)). Residue 148–155 (ARTGTGKT) coordinates ATP. Positions 257-260 (DEAD) match the DEAD box motif. The Helicase C-terminal domain maps to 338-482 (IIGPLVTEHA…ELPSIAVERG (145 aa)). The interval 489–616 (GIGSRSGGSF…FGSNDGKRSY (128 aa)) is disordered. Gly residues-rich tracts occupy residues 492 to 501 (SRSGGSFGGG) and 508 to 531 (SFGG…GRSG). 2 stretches are compositionally biased toward low complexity: residues 532-568 (GSSN…SGGR) and 578-587 (GSSNNRSSGF).

This sequence belongs to the DEAD box helicase family. DDX21/DDX50 subfamily.

The protein localises to the mitochondrion. It catalyses the reaction ATP + H2O = ADP + phosphate + H(+). In Arabidopsis thaliana (Mouse-ear cress), this protein is DEAD-box ATP-dependent RNA helicase 53, mitochondrial (RH53).